A 420-amino-acid polypeptide reads, in one-letter code: Histidine--tRNA ligase (420 aa).

The protein belongs to the class-II aminoacyl-tRNA synthetase family. Homodimer.

The protein resides in the cytoplasm. The catalysed reaction is tRNA(His) + L-histidine + ATP = L-histidyl-tRNA(His) + AMP + diphosphate + H(+). This Acholeplasma laidlawii (strain PG-8A) protein is Histidine--tRNA ligase.